We begin with the raw amino-acid sequence, 1203 residues long: Chromosome partition protein Smc (1203 aa).

32–39 is an ATP binding site; the sequence is PNGSGKSN. Coiled coils occupy residues 167–203, 250–288, and 327–497; these read ILKYRRRKEKALRKLDAMSANLARLTDLTTELRRQLK, MMRRDHDEAAARLAVASEELAAHEAALTELSGRAESVQQ, and DVLE…LERK. An SMC hinge domain is found at 511–622; that stretch reads GLLGSIAKLV…VVNYLAEALG (112 aa). Coiled-coil stretches lie at residues 657–689, 720–765, and 976–1030; these read EVTSEIDKAGAELAAAEAHMAQLNAALSGALSE, RLGQ…NVEQ, and YDRA…RKDL.

Belongs to the SMC family. In terms of assembly, homodimer.

It is found in the cytoplasm. Required for chromosome condensation and partitioning. This is Chromosome partition protein Smc from Mycobacterium leprae (strain TN).